A 1397-amino-acid polypeptide reads, in one-letter code: DNA-directed RNA polymerase subunit beta' (1397 aa).

Zn(2+)-binding residues include C75, C77, C90, and C93. Residues D465, D467, and D469 each contribute to the Mg(2+) site. C819, C893, C900, and C903 together coordinate Zn(2+).

It belongs to the RNA polymerase beta' chain family. As to quaternary structure, the RNAP catalytic core consists of 2 alpha, 1 beta, 1 beta' and 1 omega subunit. When a sigma factor is associated with the core the holoenzyme is formed, which can initiate transcription. Mg(2+) is required as a cofactor. Requires Zn(2+) as cofactor.

It carries out the reaction RNA(n) + a ribonucleoside 5'-triphosphate = RNA(n+1) + diphosphate. In terms of biological role, DNA-dependent RNA polymerase catalyzes the transcription of DNA into RNA using the four ribonucleoside triphosphates as substrates. This is DNA-directed RNA polymerase subunit beta' from Acinetobacter baumannii (strain ACICU).